A 422-amino-acid chain; its full sequence is MLEKKTIAELDPVLWDAMQNEVRRQEEHIELIASENYVTPAVMQAQGSQLTNKYAEGYPGKRYYGGCEYVDIVEQLAIDRAKELFGAEYANVQPHSGSQANAAVYGALLSAGDTILGMDLAHGGHLTHGAKVSFSGKIYNSVLYGITADGVIDYADVRTKALESKPKMIVAGFSAYSQVIDWAKMREIADEVDAYLFVDMAHVAGLIAAGLYPNPLPHAHVVTTTTHKTLAGPRGGLILSACGDEDIYKKLNSSVFPANQGGPLMHVIAAKAVCFKEALEPSFKVYQAQVLKNAKAMVEVFKQRGFDVVSNGTENHLFLVSFIKQGLTGKQADAALGAANITVNKNSVPNDPQKPFVTSGIRVGSPSITRRGFSETDAATLAGWMCDVLESIGKDNHEQVIAETKTKVLDICKRLPVYGIGR.

(6S)-5,6,7,8-tetrahydrofolate-binding positions include Leu120 and 124–126 (GHL). Lys228 bears the N6-(pyridoxal phosphate)lysine mark.

The protein belongs to the SHMT family. Homodimer. Pyridoxal 5'-phosphate is required as a cofactor.

Its subcellular location is the cytoplasm. It carries out the reaction (6R)-5,10-methylene-5,6,7,8-tetrahydrofolate + glycine + H2O = (6S)-5,6,7,8-tetrahydrofolate + L-serine. Its pathway is one-carbon metabolism; tetrahydrofolate interconversion. It functions in the pathway amino-acid biosynthesis; glycine biosynthesis; glycine from L-serine: step 1/1. Functionally, catalyzes the reversible interconversion of serine and glycine with tetrahydrofolate (THF) serving as the one-carbon carrier. This reaction serves as the major source of one-carbon groups required for the biosynthesis of purines, thymidylate, methionine, and other important biomolecules. Also exhibits THF-independent aldolase activity toward beta-hydroxyamino acids, producing glycine and aldehydes, via a retro-aldol mechanism. In Actinobacillus succinogenes (strain ATCC 55618 / DSM 22257 / CCUG 43843 / 130Z), this protein is Serine hydroxymethyltransferase.